A 291-amino-acid chain; its full sequence is Elongation factor Ts (291 aa).

The segment at 79–82 (TDFV) is involved in Mg(2+) ion dislocation from EF-Tu.

It belongs to the EF-Ts family.

The protein resides in the cytoplasm. Functionally, associates with the EF-Tu.GDP complex and induces the exchange of GDP to GTP. It remains bound to the aminoacyl-tRNA.EF-Tu.GTP complex up to the GTP hydrolysis stage on the ribosome. The polypeptide is Elongation factor Ts (Ruegeria sp. (strain TM1040) (Silicibacter sp.)).